The chain runs to 212 residues: Orotate phosphoribosyltransferase (212 aa).

5-phospho-alpha-D-ribose 1-diphosphate-binding positions include R94, K98, H100, and 120 to 128; that span reads EDLISTGGS. S124 provides a ligand contact to orotate.

The protein belongs to the purine/pyrimidine phosphoribosyltransferase family. PyrE subfamily. In terms of assembly, homodimer. It depends on Mg(2+) as a cofactor.

It carries out the reaction orotidine 5'-phosphate + diphosphate = orotate + 5-phospho-alpha-D-ribose 1-diphosphate. It functions in the pathway pyrimidine metabolism; UMP biosynthesis via de novo pathway; UMP from orotate: step 1/2. Functionally, catalyzes the transfer of a ribosyl phosphate group from 5-phosphoribose 1-diphosphate to orotate, leading to the formation of orotidine monophosphate (OMP). This chain is Orotate phosphoribosyltransferase, found in Bacillus pumilus (strain SAFR-032).